Consider the following 123-residue polypeptide: Ribosome-binding factor A (123 aa).

This sequence belongs to the RbfA family. Monomer. Binds 30S ribosomal subunits, but not 50S ribosomal subunits or 70S ribosomes.

The protein localises to the cytoplasm. In terms of biological role, one of several proteins that assist in the late maturation steps of the functional core of the 30S ribosomal subunit. Associates with free 30S ribosomal subunits (but not with 30S subunits that are part of 70S ribosomes or polysomes). Required for efficient processing of 16S rRNA. May interact with the 5'-terminal helix region of 16S rRNA. In Lactobacillus gasseri (strain ATCC 33323 / DSM 20243 / BCRC 14619 / CIP 102991 / JCM 1131 / KCTC 3163 / NCIMB 11718 / NCTC 13722 / AM63), this protein is Ribosome-binding factor A.